A 268-amino-acid polypeptide reads, in one-letter code: Putative hydro-lyase PSPTO_5379 (268 aa).

The protein belongs to the D-glutamate cyclase family.

This chain is Putative hydro-lyase PSPTO_5379, found in Pseudomonas syringae pv. tomato (strain ATCC BAA-871 / DC3000).